We begin with the raw amino-acid sequence, 959 residues long: Alanine--tRNA ligase (959 aa).

Ser-389 is modified (phosphoserine). The Zn(2+) site is built by His-606, His-610, Cys-725, and His-729.

Belongs to the class-II aminoacyl-tRNA synthetase family. As to quaternary structure, monomer. Requires Zn(2+) as cofactor.

Its subcellular location is the mitochondrion. It is found in the cytoplasm. It carries out the reaction tRNA(Ala) + L-alanine + ATP = L-alanyl-tRNA(Ala) + AMP + diphosphate. Functionally, catalyzes the attachment of alanine to tRNA(Ala) in a two-step reaction: alanine is first activated by ATP to form Ala-AMP and then transferred to the acceptor end of tRNA(Ala). Also edits incorrectly charged tRNA(Ala) via its editing domain. This Schizosaccharomyces pombe (strain 972 / ATCC 24843) (Fission yeast) protein is Alanine--tRNA ligase (ala1).